The chain runs to 539 residues: DNA damage-binding protein CMR1 (539 aa).

Positions 22 to 89 (LNLPTEAKKE…ALKQEDLGGS (68 aa)) are disordered. The segment covering 27–39 (EAKKESVDPEVAP) has biased composition (basic and acidic residues). 6 WD repeats span residues 182-223 (VTKE…EPLQ), 226-268 (LHHA…DVLD), 316-356 (LGEK…TART), 377-415 (NSRL…LDML), 462-505 (GRWV…LAHL), and 508-539 (ALMT…YWWE).

Belongs to the WD repeat DDB2/WDR76 family.

Functionally, DNA-binding protein that binds to both single- and double-stranded DNA. Binds preferentially to UV-damaged DNA. May be involved in DNA-metabolic processes. This chain is DNA damage-binding protein CMR1, found in Yarrowia lipolytica (strain CLIB 122 / E 150) (Yeast).